The sequence spans 390 residues: Bibenzyl synthase (390 aa).

The active site involves C164.

Belongs to the thiolase-like superfamily. Chalcone/stilbene synthases family.

It carries out the reaction 3-(3-hydroxyphenyl)-propanoyl-CoA + 3 malonyl-CoA + 3 H(+) = 3,3',5-trihydroxybibenzyl + 4 CO2 + 4 CoA. This Phalaenopsis sp. (Moth orchid) protein is Bibenzyl synthase (BIBSY212).